Consider the following 247-residue polypeptide: Proteasome subunit alpha type-7 (247 aa).

Belongs to the peptidase T1A family. In terms of assembly, the 26S proteasome consists of a 20S proteasome core and two 19S regulatory subunits. The 20S proteasome core is composed of 28 subunits that are arranged in four stacked rings, resulting in a barrel-shaped structure. The two end rings are each formed by seven alpha subunits, and the two central rings are each formed by seven beta subunits. The catalytic chamber with the active sites is on the inside of the barrel.

It localises to the cytoplasm. Its subcellular location is the nucleus. Functionally, the proteasome is a multicatalytic proteinase complex which is characterized by its ability to cleave peptides with Arg, Phe, Tyr, Leu, and Glu adjacent to the leaving group at neutral or slightly basic pH. The proteasome has an ATP-dependent proteolytic activity. The chain is Proteasome subunit alpha type-7 (PSA4) from Trypanosoma brucei brucei.